The sequence spans 469 residues: Arginine biosynthesis bifunctional protein ArgJ, mitochondrial (469 aa).

Substrate is bound by residues T199, K228, T239, E325, N464, and T469. The active-site Nucleophile is the T239.

The protein belongs to the ArgJ family. In terms of assembly, heterodimer of an alpha and a beta chain. Post-translationally, the alpha and beta chains are autoproteolytically processed from a single precursor protein within the mitochondrion.

It is found in the mitochondrion matrix. The catalysed reaction is N(2)-acetyl-L-ornithine + L-glutamate = N-acetyl-L-glutamate + L-ornithine. It carries out the reaction L-glutamate + acetyl-CoA = N-acetyl-L-glutamate + CoA + H(+). It participates in amino-acid biosynthesis; L-arginine biosynthesis; L-ornithine and N-acetyl-L-glutamate from L-glutamate and N(2)-acetyl-L-ornithine (cyclic): step 1/1. The protein operates within amino-acid biosynthesis; L-arginine biosynthesis; N(2)-acetyl-L-ornithine from L-glutamate: step 1/4. Catalyzes two activities which are involved in the cyclic version of arginine biosynthesis: the synthesis of acetylglutamate from glutamate and acetyl-CoA, and of ornithine by transacetylation between acetylornithine and glutamate. The polypeptide is Arginine biosynthesis bifunctional protein ArgJ, mitochondrial (Sordaria macrospora (strain ATCC MYA-333 / DSM 997 / K(L3346) / K-hell)).